We begin with the raw amino-acid sequence, 245 residues long: 1-(5-phosphoribosyl)-5-[(5-phosphoribosylamino)methylideneamino] imidazole-4-carboxamide isomerase (245 aa).

Asp8 (proton acceptor) is an active-site residue. Asp129 serves as the catalytic Proton donor.

Belongs to the HisA/HisF family.

It localises to the cytoplasm. The catalysed reaction is 1-(5-phospho-beta-D-ribosyl)-5-[(5-phospho-beta-D-ribosylamino)methylideneamino]imidazole-4-carboxamide = 5-[(5-phospho-1-deoxy-D-ribulos-1-ylimino)methylamino]-1-(5-phospho-beta-D-ribosyl)imidazole-4-carboxamide. It functions in the pathway amino-acid biosynthesis; L-histidine biosynthesis; L-histidine from 5-phospho-alpha-D-ribose 1-diphosphate: step 4/9. This Rhodopseudomonas palustris (strain BisB18) protein is 1-(5-phosphoribosyl)-5-[(5-phosphoribosylamino)methylideneamino] imidazole-4-carboxamide isomerase.